Reading from the N-terminus, the 99-residue chain is Ferredoxin, vegetative (99 aa).

The region spanning 4 to 96 (YQVRLINKKR…DCTIRTHQEP (93 aa)) is the 2Fe-2S ferredoxin-type domain. [2Fe-2S] cluster contacts are provided by C42, C47, C50, and C80.

This sequence belongs to the 2Fe2S plant-type ferredoxin family. The cofactor is [2Fe-2S] cluster.

Ferredoxins are iron-sulfur proteins that transfer electrons in a wide variety of metabolic reactions. Donates electrons to the nitrogenase 2. In Trichormus variabilis (strain ATCC 29413 / PCC 7937) (Anabaena variabilis), this protein is Ferredoxin, vegetative (fdxH2).